The chain runs to 545 residues: Aclacinomycin-N/aclacinomycin-A oxidase (545 aa).

The tat-type signal signal peptide spans 1–43; it reads MFVLNEFTRRGFLGTAAAVGGTTVVTTALGGAPAAQAAVPEAA. An FAD-binding PCMH-type domain is found at 76-256; the sequence is FRGRPDVVYV…TRYWFRTPGA (181 aa). The segment at residues 113–173 is a cross-link (6-(S-cysteinyl)-8alpha-(pros-histidyl)-FAD (His-Cys)); it reads HCFEGFVDDP…WGVTIPAGVC (61 aa). The Proton acceptor role is filled by Tyr421. Thr451 provides a ligand contact to aclacinomycin Y. Asn492 is a binding site for FAD. The active-site Proton acceptor is Tyr493. Tyr493 contacts aclacinomycin Y.

This sequence belongs to the oxygen-dependent FAD-linked oxidoreductase family. In terms of assembly, homotetramer; dimer of dimers. Requires FAD as cofactor. In terms of processing, predicted to be exported by the Tat system. The position of the signal peptide cleavage has been experimentally proven. The FAD cofactor is bound via a bicovalent 6-S-cysteinyl, 8alpha-N1-histidyl FAD linkage.

The enzyme catalyses aclacinomycin N + O2 = aclacinomycin A + H2O2. It carries out the reaction aclacinomycin A + O2 = aclacinomycin Y + H2O2. Its activity is regulated as follows. Inhibited by ascorbic acid and iron ion. Its function is as follows. Involved in the modification of the terminal sugar residues in the last two steps in the biosynthesis of polyketide antibiotics of the aclacinomycin group. In the first reaction, it catalyzes the oxidation of the hydroxyl group at carbon C4 of the L-rhodinose terminal sugar moiety of aclacinomycin N (AclN) to a keto group, modifying the sugar to cinerulose A and generating aclacinomycin A (AclA). In the second reaction, it catalyzes the elimination of two hydrogen atoms from cinerulose A, leading to a double bond between carbon atoms C2 and C3 and the generation of the L-aculose terminal sugar moiety of aclacinomycin Y (AclY). It can also use aclacinomycin analogs, epsilon-pyrromycinone glycosides, rhodirubins (A, B, C and E) and all triglycosides containing L-cinerulose, L-rhodinose or 2-deoxy-L-fucose as terminal sugar. The sequence is that of Aclacinomycin-N/aclacinomycin-A oxidase from Streptomyces galilaeus.